The sequence spans 451 residues: Tubulin alpha chain (451 aa).

Gln-11 contributes to the GTP binding site. The residue at position 40 (Lys-40) is an N6-acetyllysine. 6 residues coordinate GTP: Glu-71, Gly-144, Thr-145, Thr-179, Asn-206, and Asn-228. Glu-71 is a Mg(2+) binding site. The active site involves Glu-254. Positions 432 to 451 (YEEVGAESAEGDDEDEGEDY) are disordered.

This sequence belongs to the tubulin family. In terms of assembly, dimer of alpha and beta chains. A typical microtubule is a hollow water-filled tube with an outer diameter of 25 nm and an inner diameter of 15 nM. Alpha-beta heterodimers associate head-to-tail to form protofilaments running lengthwise along the microtubule wall with the beta-tubulin subunit facing the microtubule plus end conferring a structural polarity. Microtubules usually have 13 protofilaments but different protofilament numbers can be found in some organisms and specialized cells. Mg(2+) is required as a cofactor. In terms of processing, undergoes a tyrosination/detyrosination cycle, the cyclic removal and re-addition of a C-terminal tyrosine residue by the enzymes tubulin tyrosine carboxypeptidase (TTCP) and tubulin tyrosine ligase (TTL), respectively. Post-translationally, acetylation of alpha chains at Lys-40 stabilizes microtubules and affects affinity and processivity of microtubule motors. This modification has a role in multiple cellular functions, ranging from cell motility, cell cycle progression or cell differentiation to intracellular trafficking and signaling.

It localises to the cytoplasm. The protein resides in the cytoskeleton. It catalyses the reaction GTP + H2O = GDP + phosphate + H(+). Functionally, tubulin is the major constituent of microtubules, a cylinder consisting of laterally associated linear protofilaments composed of alpha- and beta-tubulin heterodimers. Microtubules grow by the addition of GTP-tubulin dimers to the microtubule end, where a stabilizing cap forms. Below the cap, tubulin dimers are in GDP-bound state, owing to GTPase activity of alpha-tubulin. This is Tubulin alpha chain (TBA) from Daucus carota (Wild carrot).